The sequence spans 450 residues: Sensor histidine kinase EnvZ (450 aa).

The Cytoplasmic portion of the chain corresponds to 1 to 15 (MRRLRFSPRSSFART). Residues 16-35 (LLLIVTLLFASLVTTYLVVL) traverse the membrane as a helical segment. Residues 36-158 (NFAILPSLQQ…LTEIHQGDFS (123 aa)) are Periplasmic-facing. The short motif at 71-75 (VVPPA) is the polyP-periplasmic motif element. A helical transmembrane segment spans residues 159 to 179 (PLFRYTLAIMLLAIGGAWLFI). The HAMP domain occupies 180–232 (RIQNRPLVDLEHAALQVGKGIIPPPLREYGASEVRSVTRAFNHMAAGVKQLAD). Over 180-450 (RIQNRPLVDL…TRAQGTTKEG (271 aa)) the chain is Cytoplasmic. Residues 201-205 (IPPPL) carry the polyP-cytoplasmic motif motif. The segment at 223–289 (MAAGVKQLAD…IIEQFIDYLR (67 aa)) is cytoplasmic dimerization domain (CDD), when dimerized forms osmosensitive core. The 201-residue stretch at 240–440 (GVSHDLRTPL…SIRAWLPVPV (201 aa)) folds into the Histidine kinase domain. ATP is bound by residues histidine 243, 347 to 351 (NAARY), aspartate 373, 392 to 393 (RG), and 402 to 406 (TGLGL). Histidine 243 carries the post-translational modification Phosphohistidine; by autocatalysis.

As to quaternary structure, homodimer. Interacts with MzrA. Autophosphorylated. Incubation of isolated EnvZ C-terminal fragment (residues 180-450) with increasing levels of NaCl or sucrose increases its autophosphorylation.

It localises to the cell inner membrane. It carries out the reaction ATP + protein L-histidine = ADP + protein N-phospho-L-histidine.. Its activity is regulated as follows. Activity is modulated by MzrA. In the presence of 0.2 M NaCl, 2.0 mM sodium cholate (bile salts) decreases expression from the ompC promoter; how this is mediated is unknown. Autophosphorylation is inhibited by the angucycline antibiotic waldiomycin in a non-competitive manner; waldiomycin prevents dimerization of the cytoplasmic domain and autophosphorylation. Member of the two-component regulatory system EnvZ/OmpR involved in osmoregulation (particularly of genes ompF and ompC) as well as other genes. EnvZ functions as a membrane-associated protein kinase that phosphorylates OmpR in response to environmental signals; at low osmolarity OmpR activates ompF transcription, while at high osmolarity it represses ompF and activates ompC transcription. Also dephosphorylates OmpR in the presence of ATP. The cytoplasmic dimerization domain (CDD) forms an osmosensitive core; increasing osmolarity stabilizes this segment (possibly by its contraction), enhancing the autophosphorylation rate and consequently, downstream phosphotransfer to OmpR and signaling. Autophosphorylation is greater when full-length EnvZ is reconstituted in a lipid environment, lipid-mediated allostery impacts the kinase function of EnvZ. Involved in acid stress response; this requires EnvZ but not OmpR phosphorylation, and suggests that EnvZ senses cytoplasmic acidic pH. The chain is Sensor histidine kinase EnvZ (envZ) from Escherichia coli (strain K12).